A 370-amino-acid chain; its full sequence is Dual-specificity RNA methyltransferase RlmN (370 aa).

Glu-93 functions as the Proton acceptor in the catalytic mechanism. Residues 99–337 (AEGRGTLCVS…VTTVRKTRGD (239 aa)) enclose the Radical SAM core domain. The cysteines at positions 106 and 343 are disulfide-linked. [4Fe-4S] cluster is bound by residues Cys-113, Cys-117, and Cys-120. S-adenosyl-L-methionine contacts are provided by residues 167–168 (GE), Ser-199, 221–223 (SLH), and Asn-300. Cys-343 acts as the S-methylcysteine intermediate in catalysis.

It belongs to the radical SAM superfamily. RlmN family. It depends on [4Fe-4S] cluster as a cofactor.

The protein resides in the cytoplasm. It catalyses the reaction adenosine(2503) in 23S rRNA + 2 reduced [2Fe-2S]-[ferredoxin] + 2 S-adenosyl-L-methionine = 2-methyladenosine(2503) in 23S rRNA + 5'-deoxyadenosine + L-methionine + 2 oxidized [2Fe-2S]-[ferredoxin] + S-adenosyl-L-homocysteine. It carries out the reaction adenosine(37) in tRNA + 2 reduced [2Fe-2S]-[ferredoxin] + 2 S-adenosyl-L-methionine = 2-methyladenosine(37) in tRNA + 5'-deoxyadenosine + L-methionine + 2 oxidized [2Fe-2S]-[ferredoxin] + S-adenosyl-L-homocysteine. In terms of biological role, specifically methylates position 2 of adenine 2503 in 23S rRNA and position 2 of adenine 37 in tRNAs. m2A2503 modification seems to play a crucial role in the proofreading step occurring at the peptidyl transferase center and thus would serve to optimize ribosomal fidelity. The protein is Dual-specificity RNA methyltransferase RlmN of Francisella tularensis subsp. tularensis (strain FSC 198).